The following is a 304-amino-acid chain: Non-specific ribonucleoside hydrolase RihC (304 aa).

His233 is a catalytic residue.

It belongs to the IUNH family. RihC subfamily.

In terms of biological role, hydrolyzes both purine and pyrimidine ribonucleosides with a broad-substrate specificity. The protein is Non-specific ribonucleoside hydrolase RihC of Escherichia fergusonii (strain ATCC 35469 / DSM 13698 / CCUG 18766 / IAM 14443 / JCM 21226 / LMG 7866 / NBRC 102419 / NCTC 12128 / CDC 0568-73).